The chain runs to 96 residues: Small ribosomal subunit protein uS15 (96 aa).

The protein belongs to the universal ribosomal protein uS15 family. Part of the 30S ribosomal subunit. Forms a bridge to the 50S subunit in the 70S ribosome, contacting the 23S rRNA.

One of the primary rRNA binding proteins, it binds directly to 16S rRNA where it helps nucleate assembly of the platform of the 30S subunit by binding and bridging several RNA helices of the 16S rRNA. Its function is as follows. Forms an intersubunit bridge (bridge B4) with the 23S rRNA of the 50S subunit in the ribosome. The chain is Small ribosomal subunit protein uS15 from Streptomyces griseus subsp. griseus (strain JCM 4626 / CBS 651.72 / NBRC 13350 / KCC S-0626 / ISP 5235).